We begin with the raw amino-acid sequence, 342 residues long: tRNA dimethylallyltransferase (342 aa).

Residue glycine 39 to threonine 46 participates in ATP binding. Threonine 41–threonine 46 contributes to the substrate binding site. Positions aspartate 64–glutamine 67 are interaction with substrate tRNA.

Belongs to the IPP transferase family. In terms of assembly, monomer. Mg(2+) is required as a cofactor.

It carries out the reaction adenosine(37) in tRNA + dimethylallyl diphosphate = N(6)-dimethylallyladenosine(37) in tRNA + diphosphate. In terms of biological role, catalyzes the transfer of a dimethylallyl group onto the adenine at position 37 in tRNAs that read codons beginning with uridine, leading to the formation of N6-(dimethylallyl)adenosine (i(6)A). The polypeptide is tRNA dimethylallyltransferase (Chlamydia felis (strain Fe/C-56) (Chlamydophila felis)).